The sequence spans 251 residues: Putative integrase/recombinase y4eF (251 aa).

The Core-binding (CB) domain occupies M1–L40. In terms of domain architecture, Tyr recombinase spans K58 to S231. Residues R93, K118, H183, R186, and H209 contribute to the active site. Y218 (O-(3'-phospho-DNA)-tyrosine intermediate) is an active-site residue.

Belongs to the 'phage' integrase family.

The polypeptide is Putative integrase/recombinase y4eF (Sinorhizobium fredii (strain NBRC 101917 / NGR234)).